A 407-amino-acid chain; its full sequence is Eukaryotic initiation factor 4A-II (407 aa).

Positions 1-23 are disordered; that stretch reads MSGGSADYSRDHGGPEGMEPDGV. The short motif at 33–61 is the Q motif element; sequence DNFDDMNLKESLLRGIYAYGFEKPSAIQQ. The Helicase ATP-binding domain occupies 64 to 235; it reads IIPCIKGYDV…KKFMREPIRI (172 aa). 77 to 84 provides a ligand contact to ATP; that stretch reads AQSGTGKT. Residues 183-186 carry the DEAD box motif; it reads DEAD. A Helicase C-terminal domain is found at 246–407; the sequence is GIKQFYINVE…EMPMNVADLI (162 aa).

The protein belongs to the DEAD box helicase family. eIF4A subfamily. EIF4F is a multi-subunit complex, the composition of which varies with external and internal environmental conditions. It is composed of at least EIF4A, EIF4E and EIF4G1/EIFFG3. Interacts with EIF4E.

It carries out the reaction ATP + H2O = ADP + phosphate + H(+). In terms of biological role, ATP-dependent RNA helicase which is a subunit of the eIF4F complex involved in cap recognition and is required for mRNA binding to ribosome. In the current model of translation initiation, eIF4A unwinds RNA secondary structures in the 5'-UTR of mRNAs which is necessary to allow efficient binding of the small ribosomal subunit, and subsequent scanning for the initiator codon. The polypeptide is Eukaryotic initiation factor 4A-II (EIF4A2) (Gallus gallus (Chicken)).